A 390-amino-acid chain; its full sequence is cAMP-dependent protein kinase regulatory subunit (390 aa).

Over residues 1–17 (MSASGFTSPFGANSNPF) the composition is skewed to polar residues. The segment at 1-81 (MSASGFTSPF…RPQNPDGYPA (81 aa)) is disordered. Residues 1 to 129 (MSASGFTSPF…RLKKAIQGNF (129 aa)) form a dimerization and phosphorylation region. Ser-90 carries the phosphoserine modification. 3',5'-cyclic AMP contacts are provided by residues 130–261 (LFSH…EEVP), Glu-208, Arg-217, 262–383 (ILST…GVEE), Glu-329, and Arg-338.

This sequence belongs to the cAMP-dependent kinase regulatory chain family. As to quaternary structure, tetramer, composed of 2 regulatory (R) and 2 catalytic (C) subunits. In the presence of cAMP it dissociates into 2 active monomeric C subunits and an R dimer.

This is cAMP-dependent protein kinase regulatory subunit (SUM1) from Pyricularia oryzae (strain 70-15 / ATCC MYA-4617 / FGSC 8958) (Rice blast fungus).